The following is a 429-amino-acid chain: Enolase (429 aa).

Q163 provides a ligand contact to (2R)-2-phosphoglycerate. The active-site Proton donor is E205. Residues D242, E285, and D312 each contribute to the Mg(2+) site. (2R)-2-phosphoglycerate is bound by residues K337, R366, S367, and K388. K337 functions as the Proton acceptor in the catalytic mechanism.

It belongs to the enolase family. The cofactor is Mg(2+).

It localises to the cytoplasm. It is found in the secreted. The protein resides in the cell surface. The catalysed reaction is (2R)-2-phosphoglycerate = phosphoenolpyruvate + H2O. The protein operates within carbohydrate degradation; glycolysis; pyruvate from D-glyceraldehyde 3-phosphate: step 4/5. Functionally, catalyzes the reversible conversion of 2-phosphoglycerate (2-PG) into phosphoenolpyruvate (PEP). It is essential for the degradation of carbohydrates via glycolysis. The polypeptide is Enolase (Methylorubrum extorquens (strain CM4 / NCIMB 13688) (Methylobacterium extorquens)).